The chain runs to 459 residues: Serine carboxypeptidase-like 27 (459 aa).

A signal peptide spans 1 to 20 (MDYSFLLIILLLTISTSCCA). 3 disulfide bridges follow: C91–C344, C252–C264, and C288–C312. N142 is a glycosylation site (N-linked (GlcNAc...) asparagine). Residue S184 is part of the active site. N-linked (GlcNAc...) asparagine glycans are attached at residues N289 and N333. Residues D381 and H433 contribute to the active site.

Belongs to the peptidase S10 family. In terms of tissue distribution, ubiquitous.

The protein localises to the secreted. Its function is as follows. Probable carboxypeptidase. In Arabidopsis thaliana (Mouse-ear cress), this protein is Serine carboxypeptidase-like 27 (SCPL27).